Consider the following 510-residue polypeptide: MIWHVQNENLILDSTRIFMKAFHLPLFDGSFIFPEGILIFGLILLLMIDSTSDQTDIPWFYFISSISLVMSITALLFRWREEPRILFSGNFQTNNFNEIFQFLILLCSTLCIPLSVEYIECTEMAITEFLLFVLTATLGGMFLCGANDLITIFVAPECFSLCSYLLSGYTKKDVRSNEATMKYLLMGGASSSILVHGFSWLYGSSGGEIELQEIVNGLINTQMYNSPGISIALIFITVGIGFKLSPAPSHQWTPDVYEGSPTPVVAFLSVTSKVAASASATRIFDIPFYFSSNEWHPLLEILAILSMILGNLIAITQTSMKRMLAYSSIGQIGYVIIGIIVGDANGGYASMITYMLFYISMNLGTFACIVLFGLRTGTDNIRDYAGLYTKDPFLALSLALCLLSLGGLPPLAGFFGKLHLFWCGWQAGLYFLVSIGLFTSVVSIYYYLKIIKLLMTGRKQEITPHVRNYRRSPLRSNNSIELSMIVCVIASTIPGISMNPIIAIAQDTLF.

The next 13 helical transmembrane spans lie at 26–46, 57–77, 99–119, 124–144, 149–169, 183–203, 227–247, 295–315, 323–342, 354–374, 395–415, 418–438, and 484–504; these read LFDGSFIFPEGILIFGLILLL, IPWFYFISSISLVMSITALLF, IFQFLILLCSTLCIPLSVEYI, MAITEFLLFVLTATLGGMFLC, LITIFVAPECFSLCSYLLSGY, YLLMGGASSSILVHGFSWLYG, PGISIALIFITVGIGFKLSPA, WHPLLEILAILSMILGNLIAI, MLAYSSIGQIGYVIIGIIVG, YMLFYISMNLGTFACIVLFGL, ALSLALCLLSLGGLPPLAGFF, LHLFWCGWQAGLYFLVSIGLF, and MIVCVIASTIPGISMNPIIAI.

The protein belongs to the complex I subunit 2 family. In terms of assembly, NDH is composed of at least 16 different subunits, 5 of which are encoded in the nucleus.

The protein resides in the plastid. It localises to the chloroplast thylakoid membrane. The enzyme catalyses a plastoquinone + NADH + (n+1) H(+)(in) = a plastoquinol + NAD(+) + n H(+)(out). It carries out the reaction a plastoquinone + NADPH + (n+1) H(+)(in) = a plastoquinol + NADP(+) + n H(+)(out). In terms of biological role, NDH shuttles electrons from NAD(P)H:plastoquinone, via FMN and iron-sulfur (Fe-S) centers, to quinones in the photosynthetic chain and possibly in a chloroplast respiratory chain. The immediate electron acceptor for the enzyme in this species is believed to be plastoquinone. Couples the redox reaction to proton translocation, and thus conserves the redox energy in a proton gradient. The chain is NAD(P)H-quinone oxidoreductase subunit 2 A, chloroplastic from Oenothera biennis (German evening primrose).